Consider the following 389-residue polypeptide: Phenylpropanoylacetyl-CoA synthase (389 aa).

Cys-163 is an active-site residue.

Belongs to the thiolase-like superfamily. Chalcone/stilbene synthases family. As to quaternary structure, homodimer. Expressed in both the leaf and rhizome, with higher expression in the rhizome.

The enzyme catalyses (E)-feruloyl-CoA + malonyl-CoA + H(+) = (E)-feruloylacetyl-CoA + CO2 + CoA. It catalyses the reaction 4-coumaroyl-CoA + malonyl-CoA + H(+) = (4-coumaroyl)acetyl-CoA + CO2 + CoA. Its pathway is secondary metabolite biosynthesis; flavonoid biosynthesis. In terms of biological role, catalyzes the formation of feruloyldiketide-CoA by condensing feruloyl-CoA and malonyl-CoA in the curcuminoid biosynthesis. Has no activity with cinnamoyl-CoA. The polypeptide is Phenylpropanoylacetyl-CoA synthase (DCS) (Curcuma longa (Turmeric)).